The following is a 306-amino-acid chain: ATP phosphoribosyltransferase (306 aa).

It belongs to the ATP phosphoribosyltransferase family.

The protein localises to the cytoplasm. It carries out the reaction 1-(5-phospho-beta-D-ribosyl)-ATP + diphosphate = 5-phospho-alpha-D-ribose 1-diphosphate + ATP. It participates in amino-acid biosynthesis; L-histidine biosynthesis; L-histidine from 5-phospho-alpha-D-ribose 1-diphosphate: step 1/9. In terms of biological role, catalyzes the condensation of ATP and 5-phosphoribose 1-diphosphate to form N'-(5'-phosphoribosyl)-ATP (PR-ATP). Has a crucial role in the pathway because the rate of histidine biosynthesis seems to be controlled primarily by regulation of the enzymatic activity. This is ATP phosphoribosyltransferase (HIS1) from Candida glabrata (strain ATCC 2001 / BCRC 20586 / JCM 3761 / NBRC 0622 / NRRL Y-65 / CBS 138) (Yeast).